The sequence spans 437 residues: Adenylosuccinate lyase (437 aa).

Residues 4-5 (RY), 70-72 (KHD), and 96-97 (TS) each bind N(6)-(1,2-dicarboxyethyl)-AMP. His-144 acts as the Proton donor/acceptor in catalysis. Position 215 (Gln-215) interacts with N(6)-(1,2-dicarboxyethyl)-AMP. Ser-265 functions as the Proton donor/acceptor in the catalytic mechanism. N(6)-(1,2-dicarboxyethyl)-AMP-binding positions include Ser-266, 271-273 (KKN), and 310-314 (SVERV).

This sequence belongs to the lyase 1 family. Adenylosuccinate lyase subfamily. In terms of assembly, homooligomer. Residues from neighboring subunits contribute catalytic and substrate-binding residues to each active site.

It carries out the reaction N(6)-(1,2-dicarboxyethyl)-AMP = fumarate + AMP. The catalysed reaction is (2S)-2-[5-amino-1-(5-phospho-beta-D-ribosyl)imidazole-4-carboxamido]succinate = 5-amino-1-(5-phospho-beta-D-ribosyl)imidazole-4-carboxamide + fumarate. It functions in the pathway purine metabolism; AMP biosynthesis via de novo pathway; AMP from IMP: step 2/2. It participates in purine metabolism; IMP biosynthesis via de novo pathway; 5-amino-1-(5-phospho-D-ribosyl)imidazole-4-carboxamide from 5-amino-1-(5-phospho-D-ribosyl)imidazole-4-carboxylate: step 2/2. In terms of biological role, catalyzes two reactions in de novo purine nucleotide biosynthesis. Catalyzes the breakdown of 5-aminoimidazole- (N-succinylocarboxamide) ribotide (SAICAR or 2-[5-amino-1-(5-phospho-beta-D-ribosyl)imidazole-4-carboxamido]succinate) to 5-aminoimidazole-4-carboxamide ribotide (AICAR or 5-amino-1-(5-phospho-beta-D-ribosyl)imidazole-4-carboxamide) and fumarate, and of adenylosuccinate (ADS or N(6)-(1,2-dicarboxyethyl)-AMP) to adenosine monophosphate (AMP) and fumarate. The chain is Adenylosuccinate lyase (purB) from Aquifex aeolicus (strain VF5).